Consider the following 148-residue polypeptide: Trypsin inhibitor CMe (148 aa).

The N-terminal stretch at 1–24 is a signal peptide; it reads MAFKYQLLLSAAVMLAILVATATS.

It belongs to the protease inhibitor I6 (cereal trypsin/alpha-amylase inhibitor) family. Post-translationally, five disulfide bonds, which are essential for the inhibitor activity, are probably present. As to expression, expressed in the developing endosperm. Not detected in embryo, aleurone, coleoptile, roots and leaves.

It is found in the secreted. Inhibits trypsin in vitro. Probably plays a protective role through inhibition of insect midgut proteases. The polypeptide is Trypsin inhibitor CMe (ITR1) (Hordeum vulgare (Barley)).